The sequence spans 567 residues: Geranylgeranyl transferase type-2 subunit alpha (567 aa).

6 PFTA repeats span residues 44-78 (LDES…RLEV), 88-122 (LVKA…RLPE), 124-158 (NWAR…QAAV), 159-193 (PPAE…QLHP), 207-241 (VLLK…RADP), and 363-397 (VLQS…ALDP). S98 carries the phosphoserine modification. 5 LRR repeats span residues 442 to 463 (DVRV…EQLL), 464 to 486 (LVTH…AALR), 487 to 508 (CLEV…TNLP), 509 to 530 (RLQE…QPLA), and 534 to 555 (RLVL…SEHL).

It belongs to the protein prenyltransferase subunit alpha family. Heterotrimer composed of RABGGTA, RABGGTB and CHM; within this trimer, RABGGTA and RABGGTB form the catalytic component B, while CHM (component A) mediates peptide substrate binding. The Rab GGTase dimer (RGGT) interacts with CHM (component A) prior to Rab protein binding; the association is stabilized by geranylgeranyl pyrophosphate (GGpp). The CHM:RGGT:Rab complex is destabilized by GGpp. Interacts with non-phosphorylated form of RAB8A; phosphorylation of RAB8A disrupts this interaction.

It carries out the reaction geranylgeranyl diphosphate + L-cysteinyl-[protein] = S-geranylgeranyl-L-cysteinyl-[protein] + diphosphate. The enzymatic reaction requires the aid of a Rab escort protein (also called component A), such as CHM. Functionally, catalyzes the transfer of a geranylgeranyl moiety from geranylgeranyl diphosphate to both cysteines of Rab proteins with the C-terminal sequence -XXCC, -XCXC and -CCXX, such as RAB1A, RAB3A, RAB5A and RAB7A. This chain is Geranylgeranyl transferase type-2 subunit alpha (RABGGTA), found in Sus scrofa (Pig).